We begin with the raw amino-acid sequence, 187 residues long: Elongation factor P (187 aa).

It belongs to the elongation factor P family.

The protein resides in the cytoplasm. The protein operates within protein biosynthesis; polypeptide chain elongation. In terms of biological role, involved in peptide bond synthesis. Stimulates efficient translation and peptide-bond synthesis on native or reconstituted 70S ribosomes in vitro. Probably functions indirectly by altering the affinity of the ribosome for aminoacyl-tRNA, thus increasing their reactivity as acceptors for peptidyl transferase. This is Elongation factor P from Treponema denticola (strain ATCC 35405 / DSM 14222 / CIP 103919 / JCM 8153 / KCTC 15104).